We begin with the raw amino-acid sequence, 80 residues long: MAGREGGRRQRRTKRKVCTFCAEKSEAIDYKDINKLRKFVTERGKILPRRISGNCAKHQRELTRAIKRARNIALLPFTTE.

Belongs to the bacterial ribosomal protein bS18 family. As to quaternary structure, part of the 30S ribosomal subunit. Forms a tight heterodimer with protein bS6.

Its function is as follows. Binds as a heterodimer with protein bS6 to the central domain of the 16S rRNA, where it helps stabilize the platform of the 30S subunit. The protein is Small ribosomal subunit protein bS18 of Clostridium botulinum (strain 657 / Type Ba4).